Here is a 521-residue protein sequence, read N- to C-terminus: Protein nucleotidyltransferase YdiU (521 aa).

Residues glycine 109, glycine 111, arginine 112, lysine 131, aspartate 143, glycine 144, arginine 194, and arginine 201 each contribute to the ATP site. Aspartate 270 (proton acceptor) is an active-site residue. Mg(2+) is bound by residues asparagine 271 and aspartate 280. Aspartate 280 lines the ATP pocket.

The protein belongs to the SELO family. The cofactor is Mg(2+). Mn(2+) is required as a cofactor.

The enzyme catalyses L-seryl-[protein] + ATP = 3-O-(5'-adenylyl)-L-seryl-[protein] + diphosphate. It carries out the reaction L-threonyl-[protein] + ATP = 3-O-(5'-adenylyl)-L-threonyl-[protein] + diphosphate. It catalyses the reaction L-tyrosyl-[protein] + ATP = O-(5'-adenylyl)-L-tyrosyl-[protein] + diphosphate. The catalysed reaction is L-histidyl-[protein] + UTP = N(tele)-(5'-uridylyl)-L-histidyl-[protein] + diphosphate. The enzyme catalyses L-seryl-[protein] + UTP = O-(5'-uridylyl)-L-seryl-[protein] + diphosphate. It carries out the reaction L-tyrosyl-[protein] + UTP = O-(5'-uridylyl)-L-tyrosyl-[protein] + diphosphate. In terms of biological role, nucleotidyltransferase involved in the post-translational modification of proteins. It can catalyze the addition of adenosine monophosphate (AMP) or uridine monophosphate (UMP) to a protein, resulting in modifications known as AMPylation and UMPylation. This chain is Protein nucleotidyltransferase YdiU, found in Burkholderia thailandensis (strain ATCC 700388 / DSM 13276 / CCUG 48851 / CIP 106301 / E264).